The chain runs to 141 residues: Hemoglobin subunit alpha (141 aa).

Positions 1-141 constitute a Globin domain; it reads VLSPADKTNV…VSTVLTSKYR (141 aa). Ser3 bears the Phosphoserine mark. Lys7 is subject to N6-succinyllysine. Thr8 bears the Phosphothreonine mark. At Lys11 the chain carries N6-succinyllysine. Lys16 is subject to N6-acetyllysine; alternate. Position 16 is an N6-succinyllysine; alternate (Lys16). Tyr24 is subject to Phosphotyrosine. The residue at position 35 (Ser35) is a Phosphoserine. Lys40 carries the N6-succinyllysine modification. At Ser49 the chain carries Phosphoserine. His58 provides a ligand contact to O2. Position 87 (His87) interacts with heme b. Ser102 is subject to Phosphoserine. Thr108 is modified (phosphothreonine). A Phosphoserine modification is found at Ser124. Thr134 and Thr137 each carry phosphothreonine. The residue at position 138 (Ser138) is a Phosphoserine.

Belongs to the globin family. As to quaternary structure, heterotetramer of two alpha chains and two beta chains. In terms of tissue distribution, red blood cells.

Functionally, involved in oxygen transport from the lung to the various peripheral tissues. Its function is as follows. Hemopressin acts as an antagonist peptide of the cannabinoid receptor CNR1. Hemopressin-binding efficiently blocks cannabinoid receptor CNR1 and subsequent signaling. The protein is Hemoglobin subunit alpha (HBA) of Odobenus rosmarus divergens (Pacific walrus).